The primary structure comprises 221 residues: Molybdenum cofactor guanylyltransferase (221 aa).

GTP is bound by residues 18 to 20 (IAG), Lys-35, Asn-63, Asp-81, and Asp-112. Asp-112 contacts Mg(2+).

It belongs to the MobA family. In terms of assembly, monomer. Requires Mg(2+) as cofactor.

Its subcellular location is the cytoplasm. It catalyses the reaction Mo-molybdopterin + GTP + H(+) = Mo-molybdopterin guanine dinucleotide + diphosphate. Functionally, transfers a GMP moiety from GTP to Mo-molybdopterin (Mo-MPT) cofactor (Moco or molybdenum cofactor) to form Mo-molybdopterin guanine dinucleotide (Mo-MGD) cofactor. The protein is Molybdenum cofactor guanylyltransferase of Brucella melitensis biotype 2 (strain ATCC 23457).